Reading from the N-terminus, the 541-residue chain is Chaperonin GroEL 1 (541 aa).

ATP contacts are provided by residues 29 to 32 (TLGP), 86 to 90 (DGTTT), Gly413, 478 to 480 (NAA), and Asp494. The tract at residues 520–541 (VVEKPAEAEDDGHGHGHGHHHH) is disordered. The span at 523 to 533 (KPAEAEDDGHG) shows a compositional bias: basic and acidic residues.

Belongs to the chaperonin (HSP60) family. Forms a cylinder of 14 subunits composed of two heptameric rings stacked back-to-back. Interacts with the co-chaperonin GroES.

It is found in the cytoplasm. It catalyses the reaction ATP + H2O + a folded polypeptide = ADP + phosphate + an unfolded polypeptide.. Its function is as follows. Together with its co-chaperonin GroES, plays an essential role in assisting protein folding. The GroEL-GroES system forms a nano-cage that allows encapsulation of the non-native substrate proteins and provides a physical environment optimized to promote and accelerate protein folding. In Mycolicibacterium gilvum (strain PYR-GCK) (Mycobacterium gilvum (strain PYR-GCK)), this protein is Chaperonin GroEL 1.